A 182-amino-acid chain; its full sequence is Crossover junction endodeoxyribonuclease RuvC (182 aa).

Catalysis depends on residues Asp7, Glu69, and Asp141. 3 residues coordinate Mg(2+): Asp7, Glu69, and Asp141.

It belongs to the RuvC family. In terms of assembly, homodimer which binds Holliday junction (HJ) DNA. The HJ becomes 2-fold symmetrical on binding to RuvC with unstacked arms; it has a different conformation from HJ DNA in complex with RuvA. In the full resolvosome a probable DNA-RuvA(4)-RuvB(12)-RuvC(2) complex forms which resolves the HJ. Mg(2+) is required as a cofactor.

It localises to the cytoplasm. It catalyses the reaction Endonucleolytic cleavage at a junction such as a reciprocal single-stranded crossover between two homologous DNA duplexes (Holliday junction).. The RuvA-RuvB-RuvC complex processes Holliday junction (HJ) DNA during genetic recombination and DNA repair. Endonuclease that resolves HJ intermediates. Cleaves cruciform DNA by making single-stranded nicks across the HJ at symmetrical positions within the homologous arms, yielding a 5'-phosphate and a 3'-hydroxyl group; requires a central core of homology in the junction. The consensus cleavage sequence is 5'-(A/T)TT(C/G)-3'. Cleavage occurs on the 3'-side of the TT dinucleotide at the point of strand exchange. HJ branch migration catalyzed by RuvA-RuvB allows RuvC to scan DNA until it finds its consensus sequence, where it cleaves and resolves the cruciform DNA. The protein is Crossover junction endodeoxyribonuclease RuvC of Albidiferax ferrireducens (strain ATCC BAA-621 / DSM 15236 / T118) (Rhodoferax ferrireducens).